We begin with the raw amino-acid sequence, 499 residues long: Chitinase B (499 aa).

A signal peptide spans 1 to 41 (MSTRKAVIGYYFIPTNQINNYTETDTSVVPFPVSNITPAKA). Residues 42 to 425 (KQLTHINFSF…AALDRYFNAA (384 aa)) enclose the GH18 domain. Residues 68-69 (DA) and 95-98 (GGWY) each bind chitin. Glu144 acts as the Proton donor in catalysis. Chitin-binding positions include Tyr145, 212–215 (MTYD), and Trp403. The region spanning 438-498 (LRYTGVGPGN…DSAWLKVGRL (61 aa)) is the Chitin-binding type-3 domain.

Belongs to the glycosyl hydrolase 18 family. Chitinase class II subfamily.

It catalyses the reaction Random endo-hydrolysis of N-acetyl-beta-D-glucosaminide (1-&gt;4)-beta-linkages in chitin and chitodextrins.. The protein is Chitinase B (chiB) of Serratia marcescens.